Reading from the N-terminus, the 327-residue chain is Tyrosine--tRNA ligase (327 aa).

Y33 contributes to the L-tyrosine binding site. The 'HIGH' region motif lies at 38 to 46; it reads PSGVLHLGH. Positions 154, 158, 161, and 176 each coordinate L-tyrosine. Residues 212 to 216 carry the 'KMSKS' region motif; it reads KMSSS. Position 215 (S215) interacts with ATP.

It belongs to the class-I aminoacyl-tRNA synthetase family. TyrS type 3 subfamily. As to quaternary structure, homodimer.

The protein localises to the cytoplasm. The enzyme catalyses tRNA(Tyr) + L-tyrosine + ATP = L-tyrosyl-tRNA(Tyr) + AMP + diphosphate + H(+). Catalyzes the attachment of tyrosine to tRNA(Tyr) in a two-step reaction: tyrosine is first activated by ATP to form Tyr-AMP and then transferred to the acceptor end of tRNA(Tyr). The protein is Tyrosine--tRNA ligase of Halobacterium salinarum (strain ATCC 29341 / DSM 671 / R1).